A 64-amino-acid chain; its full sequence is Large ribosomal subunit protein bL35 (64 aa).

It belongs to the bacterial ribosomal protein bL35 family.

In Micrococcus luteus (strain ATCC 4698 / DSM 20030 / JCM 1464 / CCM 169 / CCUG 5858 / IAM 1056 / NBRC 3333 / NCIMB 9278 / NCTC 2665 / VKM Ac-2230) (Micrococcus lysodeikticus), this protein is Large ribosomal subunit protein bL35.